The sequence spans 560 residues: uncharacterized protein (560 aa).

A run of 5 helical transmembrane segments spans residues 9 to 29, 61 to 81, 136 to 156, 305 to 325, and 442 to 462; these read LVIT…SFLL, ILVP…KYKI, IGIA…ASMM, SLQI…ASFI, and VVLE…TNFY.

Its subcellular location is the membrane. This is an uncharacterized protein from Saccharomyces cerevisiae (strain ATCC 204508 / S288c) (Baker's yeast).